The sequence spans 101 residues: Large ribosomal subunit protein bL20 (101 aa).

This sequence belongs to the bacterial ribosomal protein bL20 family.

Binds directly to 23S ribosomal RNA and is necessary for the in vitro assembly process of the 50S ribosomal subunit. It is not involved in the protein synthesizing functions of that subunit. This chain is Large ribosomal subunit protein bL20 (rplT), found in Carsonella ruddii (strain PV).